A 463-amino-acid polypeptide reads, in one-letter code: Probable diacyglycerol O-acyltransferase tgs1 (463 aa).

The active-site Proton acceptor is the His-137.

The protein belongs to the long-chain O-acyltransferase family.

It catalyses the reaction an acyl-CoA + a 1,2-diacyl-sn-glycerol = a triacyl-sn-glycerol + CoA. It functions in the pathway glycerolipid metabolism; triacylglycerol biosynthesis. Functionally, catalyzes the terminal and only committed step in triacylglycerol synthesis by using diacylglycerol and fatty acyl CoA as substrates. Required for storage lipid synthesis. This chain is Probable diacyglycerol O-acyltransferase tgs1 (tgs1), found in Mycobacterium tuberculosis (strain CDC 1551 / Oshkosh).